The sequence spans 513 residues: GMP synthase [glutamine-hydrolyzing] (513 aa).

The Glutamine amidotransferase type-1 domain maps to 8 to 198 (MILVLDFGSQ…VFGVCDCEGK (191 aa)). The active-site Nucleophile is C85. Active-site residues include H172 and E174. A GMPS ATP-PPase domain is found at 199 to 388 (WSMENFIEIE…LGLPDDIVWR (190 aa)). 226-232 (SGGVDSS) contributes to the ATP binding site.

As to quaternary structure, homodimer.

The enzyme catalyses XMP + L-glutamine + ATP + H2O = GMP + L-glutamate + AMP + diphosphate + 2 H(+). Its pathway is purine metabolism; GMP biosynthesis; GMP from XMP (L-Gln route): step 1/1. Its function is as follows. Catalyzes the synthesis of GMP from XMP. The polypeptide is GMP synthase [glutamine-hydrolyzing] (Bacillus velezensis (strain DSM 23117 / BGSC 10A6 / LMG 26770 / FZB42) (Bacillus amyloliquefaciens subsp. plantarum)).